The following is a 185-amino-acid chain: Large ribosomal subunit protein bL25 (185 aa).

It belongs to the bacterial ribosomal protein bL25 family. CTC subfamily. As to quaternary structure, part of the 50S ribosomal subunit; part of the 5S rRNA/L5/L18/L25 subcomplex. Contacts the 5S rRNA. Binds to the 5S rRNA independently of L5 and L18.

In terms of biological role, this is one of the proteins that binds to the 5S RNA in the ribosome where it forms part of the central protuberance. This is Large ribosomal subunit protein bL25 from Laribacter hongkongensis (strain HLHK9).